The chain runs to 769 residues: Multiple C2 domain and transmembrane region protein 5 (769 aa).

3 consecutive C2 domains span residues 23–143 (SVTG…PQWY), 184–305 (PEGV…SRWF), and 345–467 (YSSD…THSY). Ca(2+)-binding residues include Asp-56, Asp-62, Asp-109, Asp-111, and Asp-116. Helical transmembrane passes span 604–624 (IILVLYPELILPTVFLYLFLI) and 712–732 (LFVLFCLIAAIVLYVTPFQVV).

Belongs to the MCTP family. Ca(2+) serves as cofactor. Highly expressed in roots meristems and shoot apical meristems (SAMs). Observed in flowers.

It localises to the endoplasmic reticulum membrane. Its function is as follows. May function as a signaling molecule by regulating the trafficking of other regulators. This Arabidopsis thaliana (Mouse-ear cress) protein is Multiple C2 domain and transmembrane region protein 5.